We begin with the raw amino-acid sequence, 492 residues long: Trigger factor (492 aa).

The interval 77–96 is disordered; that stretch reads EILSSRGEKSATQPAISMTE. Residues 169-254 form the PPIase FKBP-type domain; it reads GDRVTMNYLG…VKEVAAAAAV (86 aa). Positions 439 to 492 are disordered; sequence ELLADDGEEETETKKKAPAKKKAAAKADDAAEGEEAAPKKKAPAKKKATEADAE.

It belongs to the FKBP-type PPIase family. Tig subfamily.

It is found in the cytoplasm. It catalyses the reaction [protein]-peptidylproline (omega=180) = [protein]-peptidylproline (omega=0). Its function is as follows. Involved in protein export. Acts as a chaperone by maintaining the newly synthesized protein in an open conformation. Functions as a peptidyl-prolyl cis-trans isomerase. The protein is Trigger factor of Agrobacterium fabrum (strain C58 / ATCC 33970) (Agrobacterium tumefaciens (strain C58)).